The following is a 77-amino-acid chain: Acyl carrier protein (77 aa).

The Carrier domain occupies 1-76 (MADFEKIKSI…DVIKFIDKLK (76 aa)). The residue at position 36 (Ser36) is an O-(pantetheine 4'-phosphoryl)serine.

Belongs to the acyl carrier protein (ACP) family. 4'-phosphopantetheine is transferred from CoA to a specific serine of apo-ACP by AcpS. This modification is essential for activity because fatty acids are bound in thioester linkage to the sulfhydryl of the prosthetic group.

The protein localises to the cytoplasm. Its pathway is lipid metabolism; fatty acid biosynthesis. Functionally, carrier of the growing fatty acid chain in fatty acid biosynthesis. In Leptospira biflexa serovar Patoc (strain Patoc 1 / Ames), this protein is Acyl carrier protein.